Consider the following 231-residue polypeptide: uncharacterized protein (231 aa).

This is an uncharacterized protein from Methanocaldococcus jannaschii (strain ATCC 43067 / DSM 2661 / JAL-1 / JCM 10045 / NBRC 100440) (Methanococcus jannaschii).